A 275-amino-acid chain; its full sequence is 2,3,4,5-tetrahydropyridine-2,6-dicarboxylate N-succinyltransferase (275 aa).

Residues Arg108 and Asp145 each contribute to the substrate site.

Belongs to the transferase hexapeptide repeat family. As to quaternary structure, homotrimer.

It is found in the cytoplasm. The enzyme catalyses (S)-2,3,4,5-tetrahydrodipicolinate + succinyl-CoA + H2O = (S)-2-succinylamino-6-oxoheptanedioate + CoA. The protein operates within amino-acid biosynthesis; L-lysine biosynthesis via DAP pathway; LL-2,6-diaminopimelate from (S)-tetrahydrodipicolinate (succinylase route): step 1/3. This is 2,3,4,5-tetrahydropyridine-2,6-dicarboxylate N-succinyltransferase from Roseobacter denitrificans (strain ATCC 33942 / OCh 114) (Erythrobacter sp. (strain OCh 114)).